Reading from the N-terminus, the 1416-residue chain is Isonitrile lipopeptide synthase (1416 aa).

Positions 188-215 (LRETAKVAEALRRQADAVQRELTAEAGQ) form a coiled coil. In terms of domain architecture, Carrier spans 965–1028 (RVWSRHLGRP…NLVCDLGSNP (64 aa)). Serine 988 carries the O-(pantetheine 4'-phosphoryl)serine modification.

It belongs to the ATP-dependent AMP-binding enzyme family. Pantetheine 4'-phosphate is required as a cofactor.

The enzyme catalyses 2 a (3R)-3-isocyanyl-fatty acyl-[ACP] + L-lysine + ATP + 2 NADPH = an isonitrile lipopeptide + 2 holo-[ACP] + AMP + diphosphate + 2 NADP(+). Nonribosomal peptide synthetase (NRPS) involved in the biosynthesis of a unique class of isonitrile lipopeptides (INLPs) that seem to play a role in metal acquisition in M.marinum. Catalyzes the final step in the pathway, i.e. the condensation of a (3R)-3-isocyanyl-fatty acyl-[ACP] to both amino groups of a lysine, producing isonitrile lipopeptides. The sequence is that of Isonitrile lipopeptide synthase from Mycobacterium marinum (strain ATCC BAA-535 / M).